A 331-amino-acid chain; its full sequence is Adenosine deaminase (331 aa).

Residues His-12 and His-14 each contribute to the Zn(2+) site. His-14, Asp-16, and Gly-170 together coordinate substrate. His-197 contacts Zn(2+). The Proton donor role is filled by Glu-200. Residue Asp-278 participates in Zn(2+) binding. Asp-279 serves as a coordination point for substrate.

It belongs to the metallo-dependent hydrolases superfamily. Adenosine and AMP deaminases family. Adenosine deaminase subfamily. Zn(2+) is required as a cofactor.

The catalysed reaction is adenosine + H2O + H(+) = inosine + NH4(+). The enzyme catalyses 2'-deoxyadenosine + H2O + H(+) = 2'-deoxyinosine + NH4(+). Catalyzes the hydrolytic deamination of adenosine and 2-deoxyadenosine. This chain is Adenosine deaminase, found in Shewanella loihica (strain ATCC BAA-1088 / PV-4).